A 731-amino-acid polypeptide reads, in one-letter code: Actin filament-associated protein 1 (731 aa).

Position 1 is an N-acetylmethionine (Met1). The segment at 56–90 (NNLPAPPQMPLPEIPQPWLPPDSGPPPLPTSSLPE) is disordered. Pro residues predominate over residues 59–84 (PAPPQMPLPEIPQPWLPPDSGPPPLP). The SH3-binding motif lies at 70–73 (PQPW). The SH2-binding 1 motif lies at 93–96 (YEEA). The segment at 118 to 139 (SSSYESYDEEEEDGKGKKTRHQ) is disordered. One can recognise a PH 1 domain in the interval 152 to 248 (DAKICAFLLR…WLKVIKEAYS (97 aa)). The disordered stretch occupies residues 252–318 (GPVDPECSPP…SKSEAKGTVS (67 aa)). The segment covering 271–284 (AELEKKLSSERPSS) has biased composition (basic and acidic residues). Residues Ser283 and Ser284 each carry the phosphoserine modification. One can recognise a PH 2 domain in the interval 348–442 (DVPTCGYLNV…WIGILLAETG (95 aa)). Residues 452 to 457 (YDYIDV) carry the SH2-binding 2 motif. The tract at residues 513 to 544 (KNKKPPASSNGVPVKGKAPSSQQKKVETAGGV) is disordered. Ser549 is modified (phosphoserine). The stretch at 558 to 649 (KNRVEADAKR…VKESLKKALA (92 aa)) forms a coiled coil. Positions 595–638 (DLRAAIEVNAGRKTQAALEDKLKRLEEECKQREAERVSLELELT) are interaction with F-actin. Positions 658 to 731 (IEPRSGTSSP…AKEWELKNGT (74 aa)) are disordered. Residues Ser665, Ser666, and Ser669 each carry the phosphoserine modification. A Phosphothreonine modification is found at Thr676. Positions 678–687 (ENSPISSCDT) are enriched in polar residues. Ser680 and Ser688 each carry phosphoserine. Over residues 721-731 (KAKEWELKNGT) the composition is skewed to basic and acidic residues.

As to quaternary structure, monomer and homomultimer. Interacts via its C-terminus with F-actin; probably involving AFAP1 multimers. Interacts with activated SRC SH3-SH2 domains. Interacts via its PH 1 domain with PRKCA, PRKCB and PRKCI. In terms of processing, phosphorylated on tyrosine residues by SRC.

The protein localises to the cytoplasm. Its subcellular location is the cytoskeleton. It localises to the stress fiber. In terms of biological role, can cross-link actin filaments into both network and bundle structures. May modulate changes in actin filament integrity and induce lamellipodia formation. May function as an adapter molecule that links other proteins, such as SRC and PKC to the actin cytoskeleton. In Mus musculus (Mouse), this protein is Actin filament-associated protein 1 (Afap1).